The primary structure comprises 411 residues: Peptidase T (411 aa).

Zn(2+) is bound at residue histidine 78. Aspartate 80 is an active-site residue. Aspartate 140 contacts Zn(2+). The active-site Proton acceptor is the glutamate 173. Residues glutamate 174, aspartate 196, and histidine 379 each contribute to the Zn(2+) site.

It belongs to the peptidase M20B family. It depends on Zn(2+) as a cofactor.

It is found in the cytoplasm. It catalyses the reaction Release of the N-terminal residue from a tripeptide.. Cleaves the N-terminal amino acid of tripeptides. This is Peptidase T from Yersinia pestis bv. Antiqua (strain Antiqua).